Reading from the N-terminus, the 224-residue chain is Menaquinol:cytochrome c reductase cytochrome b subunit (224 aa).

Residues 37-57 traverse the membrane as a helical segment; sequence FSAFVYCFGGLTFFVTVIQIL. Tyr42 lines the heme b pocket. Cys43 lines the heme c pocket. 4 residues coordinate heme b: Arg91, His94, His108, and Arg111. Helical transmembrane passes span 96 to 116, 126 to 146, and 195 to 215; these read WGAS…FFQG, WIVG…GYLL, and IHVF…FLMI. Heme b-binding residues include His196 and His211. Positions 216 and 220 each coordinate heme c. Residue Ser221 coordinates heme b.

This sequence belongs to the cytochrome b family. The main subunits of the menaquinol:cytochrome c complex are a Rieske-type iron-sulfur protein (QcrA), a cytochrome b (QcrB) and a cytochrome c (QcrC). Heme b is required as a cofactor. Requires heme c as cofactor.

It is found in the cell membrane. Its function is as follows. Component of the menaquinol:cytochrome c reductase complex. The protein is Menaquinol:cytochrome c reductase cytochrome b subunit (qcrB) of Geobacillus thermodenitrificans.